The primary structure comprises 244 residues: Prolactin-7D1 (244 aa).

Residues 1 to 30 form the signal peptide; it reads MLPSLIQPCSSGTLLMLLMSNLFLWEKVSS. 2 cysteine pairs are disulfide-bonded: C99–C215 and C232–C240.

It belongs to the somatotropin/prolactin family.

The protein resides in the secreted. This Mus musculus (Mouse) protein is Prolactin-7D1 (Prl7d1).